The following is a 538-amino-acid chain: MPVSFVHNVLEVVTPYVEYYQENLTKWYILIPTILLTLNFLSILHTKYLEYKFNAKPLTNFAQDYSFGVITPLMLMYFKWHGTVMEFACNVWNNKFLVLNGNVRTVGLRIMGLNIIETTDPENVKAILATQFNDFSLGTRHDFLYSLLGDGIFTLDGAGWKHSRAMLRPQFAREQVAHVKLLEPHVQVLFKHVRKSQGKTFDIQELFFRLTVDSSTEFLFGGSVESLRDASIGMTPSTKNIAGREEFADAFNYSQTYNAYRFLLQQFYWILNGSKFNKSIKTVHKFADFYVQKALSLTEADLEKQEGYVFLYELAKQTRDPKVLRDQLLNILVAGRDTTAGLLSFLFFELSRNPTVFEKLKEEIHNRFGAKEDARVEEITFESLKLCEYLKACVNEALRVYPSVPHNFRVATRNTTLPRGGGKDGMSPIAIKKGQNVMYTILATHRDPNIYGEDANVFRPERWFEPETRKLGWAYVPFNGGPRICLGQQFALTEASYVTVRLLQEFHTLTQDADTRYPPRLQNSLTLSLCDGANIQMY.

A helical transmembrane segment spans residues 27-46; the sequence is WYILIPTILLTLNFLSILHT. C485 contacts heme.

It belongs to the cytochrome P450 family. Requires heme as cofactor.

The protein localises to the membrane. Its function is as follows. Together with an NADPH cytochrome P450 the enzyme system catalyzes the terminal hydroxylation as the first step in the assimilation of alkanes and fatty acids. The sequence is that of Cytochrome P450 52A4 (CYP52A4) from Candida maltosa (Yeast).